The chain runs to 67 residues: Small integral membrane protein 20 (67 aa).

Topologically, residues 1-6 are mitochondrial matrix; it reads MSRNLR. Residues 7–27 traverse the membrane as a helical segment; it reads TALIFGGFISLIGAAFYPIYF. Residues 28–67 are Mitochondrial intermembrane-facing; it reads RPLMRLEEYKKEQAINRAGIVQEDVQPPGLKVWSDPFGRK. Phe-64 is subject to Phenylalanine amide.

In terms of assembly, component of the MITRAC (mitochondrial translation regulation assembly intermediate of cytochrome c oxidase complex) complex, the core components of this complex being COA3/MITRAC12 and COX14. Interacts with COA3/MITRAC12 and COX4I1. Directly interacts with newly synthesized MT-CO1/COX1. Expressed in the ovary, specifically in granulosa cells of follicles that have passed the primary stage and in oocytes (at protein level).

It is found in the mitochondrion inner membrane. It localises to the secreted. In terms of biological role, component of the MITRAC (mitochondrial translation regulation assembly intermediate of cytochrome c oxidase complex) complex, that regulates cytochrome c oxidase assembly. Promotes the progression of complex assembly after the association of MT-CO1/COX1 with COX4I1 and COX6C. Chaperone-like assembly factor required to stabilize newly synthesized MT-CO1/COX1 and to prevent its premature turnover. Peptide involved in a broad spectrum of regulatory functions. Is a ligand for GPR173. As part of the reproductive cycle, it regulates gonadotropin-releasing hormone (GnRH) signaling in the hypothalamus and pituitary gland which augments the release of luteinizing hormone. Plays a protective role in memory retention through activation of GNRHR. Regulates the secretion of AVP by hypothalamic neurons. Plays a role in the transduction of the itch sensation. Induces anxiolytic effects, reducing behavior associated with anxiety. Regulates food intake as well as satiation and satiety. In the ovary, it regulates follicular growth by stimulating granulosa cell proliferation by increasing the expression of GPR173, CREB1, CYP19A1, KITLG, FSHR, and LHCGR. It also increases the production of estradiol (E2). In the heart, it regulates contractility and relaxation. It also plays a cardioprotective role during ischemia, where it activates the SAFE and RISK pathways. Stimulates the proliferation and differentiation of preadipocytes. In pancreatic islet cells, it induces proliferation of islet cells as well as the production of INS. This chain is Small integral membrane protein 20 (SMIM20), found in Homo sapiens (Human).